The chain runs to 104 residues: UPF0125 protein PSPTO_4512 (104 aa).

This sequence belongs to the UPF0125 (RnfH) family.

The polypeptide is UPF0125 protein PSPTO_4512 (Pseudomonas syringae pv. tomato (strain ATCC BAA-871 / DC3000)).